Reading from the N-terminus, the 219-residue chain is ATP-dependent dethiobiotin synthetase BioD (219 aa).

12-17 (EVGKTY) contributes to the ATP binding site. Threonine 16 is a Mg(2+) binding site. Lysine 37 is a catalytic residue. Serine 41 contacts substrate. ATP-binding positions include aspartate 52, 114–117 (EGAG), and 174–175 (NC). The Mg(2+) site is built by aspartate 52 and glutamate 114.

The protein belongs to the dethiobiotin synthetase family. Homodimer. Mg(2+) serves as cofactor.

It is found in the cytoplasm. The enzyme catalyses (7R,8S)-7,8-diammoniononanoate + CO2 + ATP = (4R,5S)-dethiobiotin + ADP + phosphate + 3 H(+). Its pathway is cofactor biosynthesis; biotin biosynthesis; biotin from 7,8-diaminononanoate: step 1/2. Functionally, catalyzes a mechanistically unusual reaction, the ATP-dependent insertion of CO2 between the N7 and N8 nitrogen atoms of 7,8-diaminopelargonic acid (DAPA, also called 7,8-diammoniononanoate) to form a ureido ring. The chain is ATP-dependent dethiobiotin synthetase BioD from Francisella tularensis subsp. holarctica (strain FTNF002-00 / FTA).